Consider the following 639-residue polypeptide: Probable potassium transport system protein Kup 1 (639 aa).

The next 12 helical transmembrane spans lie at 27-47 (AILGSIGVVYGDIGTSPLYAF), 64-84 (VIGLTSLMIWSLTIIVTFKYI), 115-135 (VLIVLGLIGAALFLGDAMITP), 151-171 (PAMDDFIIPISVCILIGLFAI), 182-202 (FFGPITAVWFLVMGGAGLIHI), 225-245 (GFYGVVVLGAVFLTITGAEAL), 261-281 (WFCLVFPALTLNYLGQGALVL), 293-313 (LMFPQWAILPAVILATAATII), 351-371 (IYLPAVNTILLFGVVALVLTF), 377-397 (LATAYGISVTGAMVVTSLMFF), 408-428 (IWLALAVLTPLLLLELIFLGA), and 430-450 (LLKIHDGGYVPVLLAIAFTVI).

This sequence belongs to the HAK/KUP transporter (TC 2.A.72) family.

It localises to the cell inner membrane. The enzyme catalyses K(+)(in) + H(+)(in) = K(+)(out) + H(+)(out). Functionally, transport of potassium into the cell. Likely operates as a K(+):H(+) symporter. This chain is Probable potassium transport system protein Kup 1, found in Agrobacterium fabrum (strain C58 / ATCC 33970) (Agrobacterium tumefaciens (strain C58)).